Consider the following 352-residue polypeptide: tRNA-specific 2-thiouridylase MnmA (352 aa).

Residues 11-18 and methionine 37 each bind ATP; that span reads AMSGGVDS. Cysteine 101 acts as the Nucleophile in catalysis. Cysteine 101 and cysteine 197 are oxidised to a cystine. Residue glycine 125 participates in ATP binding. The tract at residues 147-149 is interaction with tRNA; the sequence is KDQ. Catalysis depends on cysteine 197, which acts as the Cysteine persulfide intermediate. The interval 302–303 is interaction with tRNA; that stretch reads RY.

Belongs to the MnmA/TRMU family.

It localises to the cytoplasm. It carries out the reaction S-sulfanyl-L-cysteinyl-[protein] + uridine(34) in tRNA + AH2 + ATP = 2-thiouridine(34) in tRNA + L-cysteinyl-[protein] + A + AMP + diphosphate + H(+). Its function is as follows. Catalyzes the 2-thiolation of uridine at the wobble position (U34) of tRNA, leading to the formation of s(2)U34. In Syntrophotalea carbinolica (strain DSM 2380 / NBRC 103641 / GraBd1) (Pelobacter carbinolicus), this protein is tRNA-specific 2-thiouridylase MnmA.